The following is a 356-amino-acid chain: tRNA (guanine(26)-N(2))-dimethyltransferase (356 aa).

The region spanning 5 to 352 (VLRREGTVEF…VSAGEVERVL (348 aa)) is the Trm1 methyltransferase domain. S-adenosyl-L-methionine is bound by residues Arg-40, Arg-67, Asp-85, Asp-111, and Ala-112.

The protein belongs to the class I-like SAM-binding methyltransferase superfamily. Trm1 family.

The catalysed reaction is guanosine(26) in tRNA + 2 S-adenosyl-L-methionine = N(2)-dimethylguanosine(26) in tRNA + 2 S-adenosyl-L-homocysteine + 2 H(+). Its function is as follows. Dimethylates a single guanine residue at position 26 of a number of tRNAs using S-adenosyl-L-methionine as donor of the methyl groups. The chain is tRNA (guanine(26)-N(2))-dimethyltransferase from Pyrobaculum arsenaticum (strain DSM 13514 / JCM 11321 / PZ6).